The primary structure comprises 200 residues: Dipicolinate synthase subunit B (200 aa).

As to quaternary structure, dipicolinate synthase likely consists of DpaA and DpaB, since both proteins are required for DPA synthesis.

The enzyme catalyses (S)-2,3-dihydrodipicolinate + NADP(+) = dipicolinate + NADPH + H(+). Together with DpaA, catalyzes the conversion of dihydrodipicolinate to dipicolinate (DPA), which constitutes up to 10% of the dry weight of the spore. The protein is Dipicolinate synthase subunit B (dpaB) of Bacillus subtilis (strain 168).